A 763-amino-acid polypeptide reads, in one-letter code: ATP-dependent Clp protease ATP-binding subunit ClpL (763 aa).

An i region spans residues 136-386; sequence IEKLGTNLTE…FSGKNSQTDV (251 aa). ATP contacts are provided by residues 181–188 and 511–518; these read GESGVGKT and GPTGVGKT. Positions 437–629 are II; sequence ATIDDVAQSV…IIIMTSNAGF (193 aa).

The protein belongs to the ClpA/ClpB family.

In terms of biological role, could be the ATP-dependent specificity component of an ATP-dependent protease. This Lactococcus lactis subsp. lactis (Streptococcus lactis) protein is ATP-dependent Clp protease ATP-binding subunit ClpL (clpL).